The primary structure comprises 469 residues: tRNA (cytosine(72)-C(5))-methyltransferase NSUN6 (469 aa).

The PUA domain maps to 111 to 203 (QCEAIVGAQC…MGIRMTEPVY (93 aa)). Residues 242-248 (CAAPGGK), Asp266, Asp293, and Asp323 contribute to the S-adenosyl-L-methionine site. Catalysis depends on Cys373, which acts as the Nucleophile. Lys419 carries the N6-acetyllysine modification.

This sequence belongs to the class I-like SAM-binding methyltransferase superfamily. RsmB/NOP family.

It localises to the cytoplasm. It carries out the reaction cytidine(72) in tRNA(Thr) + S-adenosyl-L-methionine = 5-methylcytidine(72) in tRNA(Thr) + S-adenosyl-L-homocysteine + H(+). The enzyme catalyses cytidine(72) in tRNA(Cys) + S-adenosyl-L-methionine = 5-methylcytidine(72) in tRNA(Cys) + S-adenosyl-L-homocysteine + H(+). Functionally, S-adenosyl-L-methionine-dependent methyltransferase that specifically methylates the C5 position of cytosine 72 in tRNA(Thr)(TGT) and tRNA(Cys)(GCA). In vitro also methylates tRNA(Thr)(AGT). Methylation requires, in the acceptor stem region, the presence of the 3'-CCA terminus, the target site C72, the discriminator base U73, and the second and third base pairs (2:71 and 3:70) in the tRNA substrates. This chain is tRNA (cytosine(72)-C(5))-methyltransferase NSUN6, found in Homo sapiens (Human).